The primary structure comprises 203 residues: Pectinesterase inhibitor 12 (203 aa).

A signal peptide spans 1–26 (MRMSKALAAVVAISVSLSAAAMGVDA). Disulfide bonds link Cys-32–Cys-47 and Cys-100–Cys-140.

It belongs to the PMEI family.

It is found in the secreted. The protein resides in the extracellular space. The protein localises to the apoplast. In terms of biological role, pectin methylesterase (PME) inhibitor that inhibits PME in vitro. The protein is Pectinesterase inhibitor 12 of Oryza sativa subsp. japonica (Rice).